The sequence spans 62 residues: Inner membrane protein p12 (62 aa).

The chain crosses the membrane as a helical span at residues 16–36 (LLIVAIIVVIMAIMLYYFWWM).

The protein belongs to the asfivirus inner membrane protein p12 family. Homomultimer; disulfide-linked. Not glycosylated.

It localises to the virion membrane. The polypeptide is Inner membrane protein p12 (African swine fever virus (isolate Tick/Malawi/Lil 20-1/1983) (ASFV)).